Consider the following 404-residue polypeptide: Cysteine desulfurase IscS (404 aa).

Residues 75-76, Asn155, Gln183, and 203-205 contribute to the pyridoxal 5'-phosphate site; these read AT and SGH. Position 206 is an N6-(pyridoxal phosphate)lysine (Lys206). Thr243 contributes to the pyridoxal 5'-phosphate binding site. The Cysteine persulfide intermediate role is filled by Cys328. Cys328 contacts [2Fe-2S] cluster.

The protein belongs to the class-V pyridoxal-phosphate-dependent aminotransferase family. NifS/IscS subfamily. As to quaternary structure, homodimer. Forms a heterotetramer with IscU, interacts with other sulfur acceptors. It depends on pyridoxal 5'-phosphate as a cofactor.

The protein resides in the cytoplasm. It catalyses the reaction (sulfur carrier)-H + L-cysteine = (sulfur carrier)-SH + L-alanine. It participates in cofactor biosynthesis; iron-sulfur cluster biosynthesis. In terms of biological role, master enzyme that delivers sulfur to a number of partners involved in Fe-S cluster assembly, tRNA modification or cofactor biosynthesis. Catalyzes the removal of elemental sulfur and selenium atoms from cysteine and selenocysteine to produce alanine. Functions as a sulfur delivery protein for Fe-S cluster synthesis onto IscU, an Fe-S scaffold assembly protein, as well as other S acceptor proteins. Also functions as a selenium delivery protein in the pathway for the biosynthesis of selenophosphate. The protein is Cysteine desulfurase IscS of Salmonella paratyphi C (strain RKS4594).